Reading from the N-terminus, the 140-residue chain is Large-conductance mechanosensitive channel (140 aa).

3 helical membrane passes run 7–27 (EFAF…GAAF), 30–50 (IITS…FGTV), and 64–84 (GLFV…FLFV).

The protein belongs to the MscL family. Homopentamer.

Its subcellular location is the cell membrane. Channel that opens in response to stretch forces in the membrane lipid bilayer. May participate in the regulation of osmotic pressure changes within the cell. This Staphylococcus carnosus (strain TM300) protein is Large-conductance mechanosensitive channel.